The chain runs to 187 residues: MSKKSNKNLAFSLLGLIISMVLLSFASVPIYNLFCKVTGYGGTTAKETVSVYSKVKGTKPIIIEFDANVDKDLPWRFIPRQQRVQIVPGQNTLVFYETENLSNNDIIGTSVYNVTPNKAGKYFVKIHCFCFEEQLLKADEKVLMPVTFYIDKDFELDPEMQDIKVLTLSYSFFKVREIASLRGNTKY.

Residues 1 to 9 lie on the Cytoplasmic side of the membrane; that stretch reads MSKKSNKNL. A helical; Signal-anchor for type II membrane protein membrane pass occupies residues 10–30; the sequence is AFSLLGLIISMVLLSFASVPI. Residues 31-187 are Periplasmic-facing; that stretch reads YNLFCKVTGY…IASLRGNTKY (157 aa).

Belongs to the COX11/CtaG family.

Its subcellular location is the cell inner membrane. Functionally, exerts its effect at some terminal stage of cytochrome c oxidase synthesis, probably by being involved in the insertion of the copper B into subunit I. In Rickettsia felis (strain ATCC VR-1525 / URRWXCal2) (Rickettsia azadi), this protein is Cytochrome c oxidase assembly protein CtaG.